The following is a 374-amino-acid chain: P2Y purinoceptor 11 (374 aa).

Residues Met1–Asp29 are Extracellular-facing. Residue Asn4 is glycosylated (N-linked (GlcNAc...) asparagine). The helical transmembrane segment at Phe30–Leu50 threads the bilayer. The Cytoplasmic segment spans residues Tyr51–Ala64. The chain crosses the membrane as a helical span at residues Val65–Leu85. The Extracellular segment spans residues Ala86–Ser116. A disulfide bond links Cys102 and Cys180. A helical transmembrane segment spans residues Val117–Ala137. Topologically, residues Arg138–Ala146 are cytoplasmic. The helical transmembrane segment at Trp147–Phe167 threads the bilayer. At Ser168 to Ser206 the chain is on the extracellular side. N-linked (GlcNAc...) asparagine glycosylation occurs at Asn179. A helical membrane pass occupies residues Leu207 to Ala227. Over Leu228 to Arg245 the chain is Cytoplasmic. Residues Val246 to Ile266 form a helical membrane-spanning segment. At Met267 to Gly308 the chain is on the extracellular side. Residues Leu309–Gly329 traverse the membrane as a helical segment. Topologically, residues Cys330–Gln374 are cytoplasmic. The disordered stretch occupies residues Glu345–Gln374.

Belongs to the G-protein coupled receptor 1 family. In terms of tissue distribution, highest expression in liver and spleen.

It localises to the cell membrane. Receptor for ATP and ADP coupled to G-proteins that activate both phosphatidylinositol-calcium and adenylyl cyclase second messenger systems. Not activated by UTP or UDP. The sequence is that of P2Y purinoceptor 11 (P2RY11) from Homo sapiens (Human).